We begin with the raw amino-acid sequence, 347 residues long: Ribosomal RNA small subunit methyltransferase H (347 aa).

Residues 47–49 (GGY), D64, F91, D114, and Q121 contribute to the S-adenosyl-L-methionine site. Residues 291–347 (PAVKGAVGPTAEEEERNPRARSAKLRAGIRTENPPLEDDLSLFGLPKLPETNELARS) form a disordered region.

The protein belongs to the methyltransferase superfamily. RsmH family.

It is found in the cytoplasm. The enzyme catalyses cytidine(1402) in 16S rRNA + S-adenosyl-L-methionine = N(4)-methylcytidine(1402) in 16S rRNA + S-adenosyl-L-homocysteine + H(+). Its function is as follows. Specifically methylates the N4 position of cytidine in position 1402 (C1402) of 16S rRNA. This Brucella anthropi (strain ATCC 49188 / DSM 6882 / CCUG 24695 / JCM 21032 / LMG 3331 / NBRC 15819 / NCTC 12168 / Alc 37) (Ochrobactrum anthropi) protein is Ribosomal RNA small subunit methyltransferase H.